A 339-amino-acid chain; its full sequence is MAASALYACTKCTQRYPFEELSQGQQLCKECRIAHPIVKCTYCRSEFQQESKTNTICKKCAQNVKQFGTPKPCQYCNIIAAFIGTKCQRCTNSEKKYGPPQTCEQCKQQCAFDRKEEGRRKVDGKLLCWLCTLSYKRVLQKTKEQRKSLGSSHSNSSSSSLTEKDQHHPKHHHHHHHHHHRHSSSHHKISNLSPEEEQGLWKQSHKSSATIQNETPKKKPKLESKPSNGDSSSINQSADSGGTDNFVLISQLKEEVMSLKRLLQQRDQTILEKDKKLTELKADFQYQESNLRTKMNSMEKAHKETVEQLQAKNRELLKQVAALSKGKKFDKSGSILTSP.

An N-acetylalanine modification is found at Ala-2. Phosphoserine occurs at positions 22 and 148. The segment at 144 to 243 (EQRKSLGSSH…INQSADSGGT (100 aa)) is disordered. Low complexity predominate over residues 148 to 160 (SLGSSHSNSSSSS). Positions 167-189 (HHPKHHHHHHHHHHRHSSSHHKI) are enriched in basic residues. Ser-193 bears the Phosphoserine mark. Phosphothreonine is present on Thr-215. Over residues 215–224 (TPKKKPKLES) the composition is skewed to basic and acidic residues. Over residues 228–243 (NGDSSSINQSADSGGT) the composition is skewed to polar residues. Residues 248-328 (LISQLKEEVM…QVAALSKGKK (81 aa)) are a coiled coil.

Belongs to the FAM76 family. Interacts with HNRNPA2B1 (via C-terminus); the interaction results in retention of HNRNPA2B1 in the nucleus and inhibition of the NF-kappa-B-mediated inflammatory pathway.

Its subcellular location is the nucleus speckle. Negatively regulates the NF-kappa-B-mediated inflammatory pathway by preventing the translocation of HNRNPA2B1 from the nucleus to the cytoplasm. Inhibits the PI3K/Akt/NF-kappa-B pathway-mediated polarization of M1 macrophages by binding to and stabilizing PIK3CD mRNA, resulting in increased levels of PIK3CD protein and increased levels of phosphorylated downstream target AKT which leads to decreased NF-kappa-B signaling. In Homo sapiens (Human), this protein is Protein FAM76B (FAM76B).